The primary structure comprises 914 residues: Isoleucine--tRNA ligase (914 aa).

Residues 64 to 74 carry the 'HIGH' region motif; that stretch reads PYANGNFHLGH. L-isoleucyl-5'-AMP is bound at residue Glu557. Positions 598 to 602 match the 'KMSKS' region motif; that stretch reads PMSKS. Position 601 (Lys601) interacts with ATP. Positions 889, 892, 906, and 909 each coordinate Zn(2+).

It belongs to the class-I aminoacyl-tRNA synthetase family. IleS type 1 subfamily. Monomer. The cofactor is Zn(2+).

It localises to the cytoplasm. It carries out the reaction tRNA(Ile) + L-isoleucine + ATP = L-isoleucyl-tRNA(Ile) + AMP + diphosphate. Its function is as follows. Catalyzes the attachment of isoleucine to tRNA(Ile). As IleRS can inadvertently accommodate and process structurally similar amino acids such as valine, to avoid such errors it has two additional distinct tRNA(Ile)-dependent editing activities. One activity is designated as 'pretransfer' editing and involves the hydrolysis of activated Val-AMP. The other activity is designated 'posttransfer' editing and involves deacylation of mischarged Val-tRNA(Ile). The sequence is that of Isoleucine--tRNA ligase from Leptospira interrogans serogroup Icterohaemorrhagiae serovar copenhageni (strain Fiocruz L1-130).